The following is a 198-amino-acid chain: Small ribosomal subunit protein uS5 (198 aa).

Residues 46–109 (LEDDVLEISM…NNAKLNIFKV (64 aa)) enclose the S5 DRBM domain.

This sequence belongs to the universal ribosomal protein uS5 family. As to quaternary structure, part of the 30S ribosomal subunit. Contacts protein S4.

With S4 and S12 plays an important role in translational accuracy. This Archaeoglobus fulgidus (strain ATCC 49558 / DSM 4304 / JCM 9628 / NBRC 100126 / VC-16) protein is Small ribosomal subunit protein uS5.